We begin with the raw amino-acid sequence, 432 residues long: Histidinol dehydrogenase (432 aa).

Substrate contacts are provided by Ser240, Gln262, and His265. Zn(2+) contacts are provided by Gln262 and His265. Catalysis depends on proton acceptor residues Glu330 and His331. Substrate contacts are provided by His331, Asp364, Glu418, and His423. A Zn(2+)-binding site is contributed by Asp364. Position 423 (His423) interacts with Zn(2+).

It belongs to the histidinol dehydrogenase family. It depends on Zn(2+) as a cofactor.

The catalysed reaction is L-histidinol + 2 NAD(+) + H2O = L-histidine + 2 NADH + 3 H(+). The protein operates within amino-acid biosynthesis; L-histidine biosynthesis; L-histidine from 5-phospho-alpha-D-ribose 1-diphosphate: step 9/9. In terms of biological role, catalyzes the sequential NAD-dependent oxidations of L-histidinol to L-histidinaldehyde and then to L-histidine. In Wolinella succinogenes (strain ATCC 29543 / DSM 1740 / CCUG 13145 / JCM 31913 / LMG 7466 / NCTC 11488 / FDC 602W) (Vibrio succinogenes), this protein is Histidinol dehydrogenase.